A 296-amino-acid chain; its full sequence is mRNA 3'-end-processing protein RNA15 (296 aa).

One can recognise an RRM domain in the interval 18 to 96 (RVVYLGSIPY…RFLKCGYSSN (79 aa)). The segment at 99–140 (ISGVSQQQQQQYNNINGNNNNNGNNNNNSNGPDFQNSGNANF) is disordered. Residues 100–135 (SGVSQQQQQQYNNINGNNNNNGNNNNNSNGPDFQNS) are compositionally biased toward low complexity.

Component of the CFIA complex, which is composed of RNA14, RNA15, PCF11 and CLP1. Interacts directly with RNA14. Interacts with polyadenylate-binding protein PAB1.

It is found in the nucleus. In terms of biological role, RNA-binding component of the cleavage factor IA (CFIA) complex, which is involved in the endonucleolytic cleavage during polyadenylation-dependent pre-mRNA 3'-end formation and cooperates with the cleavage factor NAB4/CFIB and the cleavage and polyadenylation factor (CPF) complex. Binds to A-rich RNA sequence elements. The protein is mRNA 3'-end-processing protein RNA15 (RNA15) of Saccharomyces cerevisiae (strain ATCC 204508 / S288c) (Baker's yeast).